The sequence spans 394 residues: Elongation factor Tu 1 (394 aa).

Residues 10 to 204 enclose the tr-type G domain; that stretch reads KPHVNVGTIG…ALDNYIPEPE (195 aa). The interval 19–26 is G1; that stretch reads GHVDHGKT. 19 to 26 contributes to the GTP binding site; sequence GHVDHGKT. Threonine 26 is a binding site for Mg(2+). The interval 60–64 is G2; that stretch reads GITIS. Residues 81–84 are G3; sequence DCPG. GTP is bound by residues 81-85 and 136-139; these read DCPGH and NKCD. The G4 stretch occupies residues 136-139; it reads NKCD. The tract at residues 174–176 is G5; that stretch reads SAL.

The protein belongs to the TRAFAC class translation factor GTPase superfamily. Classic translation factor GTPase family. EF-Tu/EF-1A subfamily. As to quaternary structure, monomer.

It localises to the cytoplasm. The enzyme catalyses GTP + H2O = GDP + phosphate + H(+). Its function is as follows. GTP hydrolase that promotes the GTP-dependent binding of aminoacyl-tRNA to the A-site of ribosomes during protein biosynthesis. This chain is Elongation factor Tu 1, found in Photobacterium profundum (strain SS9).